The sequence spans 431 residues: Glutamate--tRNA ligase 1 (431 aa).

The 'HIGH' region motif lies at 6–16; the sequence is PSPTGDMHIGN. Positions 235 to 239 match the 'KMSKS' region motif; it reads KMSKR. Residue Lys238 participates in ATP binding.

It belongs to the class-I aminoacyl-tRNA synthetase family. Glutamate--tRNA ligase type 1 subfamily. In terms of assembly, monomer.

It is found in the cytoplasm. The catalysed reaction is tRNA(Glu) + L-glutamate + ATP = L-glutamyl-tRNA(Glu) + AMP + diphosphate. Catalyzes the attachment of glutamate to tRNA(Glu) in a two-step reaction: glutamate is first activated by ATP to form Glu-AMP and then transferred to the acceptor end of tRNA(Glu). In Campylobacter jejuni (strain RM1221), this protein is Glutamate--tRNA ligase 1.